A 91-amino-acid chain; its full sequence is Small ribosomal subunit protein uS19 (91 aa).

It belongs to the universal ribosomal protein uS19 family.

Functionally, protein S19 forms a complex with S13 that binds strongly to the 16S ribosomal RNA. The sequence is that of Small ribosomal subunit protein uS19 from Prochlorococcus marinus subsp. pastoris (strain CCMP1986 / NIES-2087 / MED4).